Reading from the N-terminus, the 482-residue chain is Ribosomal protein uS12 methylthiotransferase RimO (482 aa).

The MTTase N-terminal domain occupies 2 to 115 (MKVHIITLGC…IAEVVETFQP (114 aa)). [4Fe-4S] cluster-binding residues include C11, C47, C79, C177, C181, and C184. The Radical SAM core domain occupies 163 to 394 (RAVGPSAYLK…MRLQQRISRE (232 aa)). In terms of domain architecture, TRAM spans 397–466 (RRWLGRVVRV…DYDLWGDVVG (70 aa)).

Belongs to the methylthiotransferase family. RimO subfamily. [4Fe-4S] cluster is required as a cofactor.

Its subcellular location is the cytoplasm. The enzyme catalyses L-aspartate(89)-[ribosomal protein uS12]-hydrogen + (sulfur carrier)-SH + AH2 + 2 S-adenosyl-L-methionine = 3-methylsulfanyl-L-aspartate(89)-[ribosomal protein uS12]-hydrogen + (sulfur carrier)-H + 5'-deoxyadenosine + L-methionine + A + S-adenosyl-L-homocysteine + 2 H(+). Its function is as follows. Catalyzes the methylthiolation of an aspartic acid residue of ribosomal protein uS12. The polypeptide is Ribosomal protein uS12 methylthiotransferase RimO (Roseiflexus castenholzii (strain DSM 13941 / HLO8)).